Consider the following 394-residue polypeptide: Phosphoglycerate kinase (394 aa).

Residues 21-23 (DLN), Arg37, 60-63 (HLGR), Arg115, and Arg148 each bind substrate. ATP is bound by residues Lys199, Glu321, and 347–350 (GGDT).

Belongs to the phosphoglycerate kinase family. As to quaternary structure, monomer.

It localises to the cytoplasm. It carries out the reaction (2R)-3-phosphoglycerate + ATP = (2R)-3-phospho-glyceroyl phosphate + ADP. The protein operates within carbohydrate degradation; glycolysis; pyruvate from D-glyceraldehyde 3-phosphate: step 2/5. This is Phosphoglycerate kinase from Azoarcus sp. (strain BH72).